A 111-amino-acid chain; its full sequence is Putative pterin-4-alpha-carbinolamine dehydratase (111 aa).

The protein belongs to the pterin-4-alpha-carbinolamine dehydratase family.

The enzyme catalyses (4aS,6R)-4a-hydroxy-L-erythro-5,6,7,8-tetrahydrobiopterin = (6R)-L-erythro-6,7-dihydrobiopterin + H2O. This Alkaliphilus metalliredigens (strain QYMF) protein is Putative pterin-4-alpha-carbinolamine dehydratase.